The chain runs to 152 residues: 6,7-dimethyl-8-ribityllumazine synthase (152 aa).

Residues phenylalanine 22, 56–58, and 79–81 contribute to the 5-amino-6-(D-ribitylamino)uracil site; these read AFE and AVI. 84–85 serves as a coordination point for (2S)-2-hydroxy-3-oxobutyl phosphate; sequence AT. Histidine 87 serves as the catalytic Proton donor. Phenylalanine 112 contacts 5-amino-6-(D-ribitylamino)uracil. Arginine 126 is a binding site for (2S)-2-hydroxy-3-oxobutyl phosphate.

This sequence belongs to the DMRL synthase family.

It catalyses the reaction (2S)-2-hydroxy-3-oxobutyl phosphate + 5-amino-6-(D-ribitylamino)uracil = 6,7-dimethyl-8-(1-D-ribityl)lumazine + phosphate + 2 H2O + H(+). It functions in the pathway cofactor biosynthesis; riboflavin biosynthesis; riboflavin from 2-hydroxy-3-oxobutyl phosphate and 5-amino-6-(D-ribitylamino)uracil: step 1/2. Functionally, catalyzes the formation of 6,7-dimethyl-8-ribityllumazine by condensation of 5-amino-6-(D-ribitylamino)uracil with 3,4-dihydroxy-2-butanone 4-phosphate. This is the penultimate step in the biosynthesis of riboflavin. The protein is 6,7-dimethyl-8-ribityllumazine synthase of Carboxydothermus hydrogenoformans (strain ATCC BAA-161 / DSM 6008 / Z-2901).